The primary structure comprises 137 residues: uncharacterized protein (137 aa).

The protein belongs to the ycf72 family.

It localises to the plastid. It is found in the chloroplast. This is an uncharacterized protein from Zea mays (Maize).